Consider the following 295-residue polypeptide: GTPase Era (295 aa).

In terms of domain architecture, Era-type G spans 7–176; that stretch reads KTVSVCIIGR…ITSKAKIAPW (170 aa). The interval 15–22 is G1; the sequence is GRPNSGKS. Position 15-22 (15-22) interacts with GTP; sequence GRPNSGKS. Residues 41–45 are G2; that stretch reads QTTRS. The tract at residues 62-65 is G3; that stretch reads DTPG. Residues 62–66 and 124–127 contribute to the GTP site; these read DTPGI and NKID. The G4 stretch occupies residues 124-127; the sequence is NKID. The tract at residues 152 to 154 is G5; the sequence is ISA. The 78-residue stretch at 204-281 folds into the KH type-2 domain; that stretch reads LQQELPYKLT…HLFLFVKVQE (78 aa).

It belongs to the TRAFAC class TrmE-Era-EngA-EngB-Septin-like GTPase superfamily. Era GTPase family. Monomer.

Its subcellular location is the cytoplasm. The protein localises to the cell inner membrane. An essential GTPase that binds both GDP and GTP, with rapid nucleotide exchange. Plays a role in 16S rRNA processing and 30S ribosomal subunit biogenesis and possibly also in cell cycle regulation and energy metabolism. The chain is GTPase Era from Rickettsia bellii (strain RML369-C).